The primary structure comprises 157 residues: Ribosome maturation factor RimP (157 aa).

This sequence belongs to the RimP family.

It localises to the cytoplasm. Required for maturation of 30S ribosomal subunits. The sequence is that of Ribosome maturation factor RimP from Lactococcus lactis subsp. cremoris (strain MG1363).